Reading from the N-terminus, the 263-residue chain is Tryptophan synthase alpha chain (263 aa).

Active-site proton acceptor residues include Glu-49 and Asp-60.

Belongs to the TrpA family. As to quaternary structure, tetramer of two alpha and two beta chains.

It catalyses the reaction (1S,2R)-1-C-(indol-3-yl)glycerol 3-phosphate + L-serine = D-glyceraldehyde 3-phosphate + L-tryptophan + H2O. It functions in the pathway amino-acid biosynthesis; L-tryptophan biosynthesis; L-tryptophan from chorismate: step 5/5. Functionally, the alpha subunit is responsible for the aldol cleavage of indoleglycerol phosphate to indole and glyceraldehyde 3-phosphate. This Clostridium kluyveri (strain NBRC 12016) protein is Tryptophan synthase alpha chain.